We begin with the raw amino-acid sequence, 418 residues long: ML-236A carboxylate methylbutanoyltransferase mlcH (418 aa).

Arg-78 is a monacolin J binding site. Catalysis depends on Ser-81, which acts as the Acyl-ester intermediate. Monacolin J contacts are provided by Arg-178, Tyr-193, and Tyr-262. Gly-370 is a binding site for 2-methylbutanoate.

This sequence belongs to the class-A beta-lactamase family.

It catalyses the reaction ML-236A carboxylate + (S)-2-methylbutanoyl-[2-methylbutanoate polyketide synthase] = mevinic carboxylate + holo-[2-methylbutanoate polyketide synthase]. Its pathway is polyketide biosynthesis. Its function is as follows. Compactin diketide synthase; part of the gene cluster that mediates the biosynthesis of compactin, also known as mevastatin or ML-236B, and which acts as a potent competitive inhibitor of HMG-CoA reductase. Compactin biosynthesis is performed in two stages. The first stage is catalyzed by the nonaketide synthase mlcA, which belongs to type I polyketide synthases and catalyzes the iterative nine-step formation of the polyketide. This PKS stage is completed by the action of dehydrogenase mlcG, which catalyzes the NADPH-dependent reduction of the unsaturated tetra-, penta- and heptaketide intermediates that arise during the mlcA-mediated biosynthesis of the nonaketide chain and leads to dihydro-ML-236C carboxylate. Covalently bound dihydro-ML-236C carboxylate is released from mlcA by the mlcF esterase. Conversion of dihydro-ML-236C carboxylate into ML-236A carboxylate is subsequently performed with the participation of molecular oxygen and P450 monoogygenase mlcC. Finally, mlcH performs the conversion of ML-236A carboxylate to ML-236B/compactin carboxylate through the addition of the side-chain diketide moiety produced by the diketide synthase mlcB. The chain is ML-236A carboxylate methylbutanoyltransferase mlcH from Penicillium citrinum.